Here is a 228-residue protein sequence, read N- to C-terminus: Ribose-5-phosphate isomerase A (228 aa).

Residues T32 to T35, D85 to D88, and K98 to G101 contribute to the substrate site. Catalysis depends on E107, which acts as the Proton acceptor. A substrate-binding site is contributed by K125.

The protein belongs to the ribose 5-phosphate isomerase family. Homodimer.

It catalyses the reaction aldehydo-D-ribose 5-phosphate = D-ribulose 5-phosphate. It functions in the pathway carbohydrate degradation; pentose phosphate pathway; D-ribose 5-phosphate from D-ribulose 5-phosphate (non-oxidative stage): step 1/1. Catalyzes the reversible conversion of ribose-5-phosphate to ribulose 5-phosphate. This chain is Ribose-5-phosphate isomerase A, found in Cupriavidus pinatubonensis (strain JMP 134 / LMG 1197) (Cupriavidus necator (strain JMP 134)).